The following is a 663-amino-acid chain: Alcohol oxidase 2 (663 aa).

8-38 (DILVLGGGSSGSCIAGRLANLDHSLKVGLIE) provides a ligand contact to FAD. Catalysis depends on H567, which acts as the Proton acceptor. Residues 661–663 (ARF) carry the Microbody targeting signal motif.

This sequence belongs to the GMC oxidoreductase family. As to quaternary structure, homooctamer. Requires FAD as cofactor.

It localises to the peroxisome matrix. The catalysed reaction is a primary alcohol + O2 = an aldehyde + H2O2. It participates in energy metabolism; methane degradation. In terms of biological role, minor isoform of alcohol oxidase, which catalyzes the oxidation of methanol to formaldehyde and hydrogen peroxide, the first step in the methanol utilization pathway of methylotrophic yeasts. The chain is Alcohol oxidase 2 (AOX2) from Komagataella phaffii (strain ATCC 76273 / CBS 7435 / CECT 11047 / NRRL Y-11430 / Wegner 21-1) (Yeast).